Consider the following 211-residue polypeptide: tRNA (guanine-N(7)-)-methyltransferase (211 aa).

S-adenosyl-L-methionine contacts are provided by aspartate 40, glutamate 65, asparagine 92, and aspartate 118. Aspartate 118 is an active-site residue. Substrate-binding residues include lysine 122 and aspartate 154.

The protein belongs to the class I-like SAM-binding methyltransferase superfamily. TrmB family.

The catalysed reaction is guanosine(46) in tRNA + S-adenosyl-L-methionine = N(7)-methylguanosine(46) in tRNA + S-adenosyl-L-homocysteine. The protein operates within tRNA modification; N(7)-methylguanine-tRNA biosynthesis. Its function is as follows. Catalyzes the formation of N(7)-methylguanine at position 46 (m7G46) in tRNA. This is tRNA (guanine-N(7)-)-methyltransferase from Microcystis aeruginosa (strain NIES-843 / IAM M-2473).